We begin with the raw amino-acid sequence, 172 residues long: uncharacterized protein (172 aa).

Belongs to the flavoredoxin family. FMN serves as cofactor.

This is an uncharacterized protein from Pyrococcus abyssi (strain GE5 / Orsay).